Here is a 298-residue protein sequence, read N- to C-terminus: 4-diphosphocytidyl-2-C-methyl-D-erythritol kinase (298 aa).

Lys25 is an active-site residue. An ATP-binding site is contributed by 109–119 (PVGGGFGGGSS). Asp151 is a catalytic residue.

Belongs to the GHMP kinase family. IspE subfamily.

The catalysed reaction is 4-CDP-2-C-methyl-D-erythritol + ATP = 4-CDP-2-C-methyl-D-erythritol 2-phosphate + ADP + H(+). It functions in the pathway isoprenoid biosynthesis; isopentenyl diphosphate biosynthesis via DXP pathway; isopentenyl diphosphate from 1-deoxy-D-xylulose 5-phosphate: step 3/6. In terms of biological role, catalyzes the phosphorylation of the position 2 hydroxy group of 4-diphosphocytidyl-2C-methyl-D-erythritol. This is 4-diphosphocytidyl-2-C-methyl-D-erythritol kinase from Xylella fastidiosa (strain 9a5c).